A 101-amino-acid polypeptide reads, in one-letter code: RNA-binding protein Hfq (101 aa).

The Sm domain occupies 9–68 (DPFLNALRRERVPVSIYLVNGIKLQGQVESFDQFVILLKNTVSQMVYKHAISTVVPSPPV). The segment at 62 to 101 (VVPSPPVSHHSNTPSGSTNNYHGSNPSAPQQPQQDSDDAE) is disordered. The span at 70 to 86 (HHSNTPSGSTNNYHGSN) shows a compositional bias: polar residues.

The protein belongs to the Hfq family. As to quaternary structure, homohexamer.

In terms of biological role, RNA chaperone that binds small regulatory RNA (sRNAs) and mRNAs to facilitate mRNA translational regulation in response to envelope stress, environmental stress and changes in metabolite concentrations. Also binds with high specificity to tRNAs. This is RNA-binding protein Hfq from Yersinia pestis (strain Pestoides F).